We begin with the raw amino-acid sequence, 392 residues long: Probable Ni/Fe-hydrogenase 2 b-type cytochrome subunit (392 aa).

Topologically, residues 1–11 (MSHDPQPLGGK) are periplasmic. Residues 12–32 (IISKPVMIFGPLIVICMLLIV) form a helical membrane-spanning segment. The Cytoplasmic portion of the chain corresponds to 33–34 (KR). The chain crosses the membrane as a helical span at residues 35 to 55 (LVFGLGSVSDLNGGFPWGVWI). The Periplasmic portion of the chain corresponds to 56–58 (AFD). Residues 59 to 79 (LLIGTGFACGGWALAWAVYVF) traverse the membrane as a helical segment. Over 80–90 (NRGQYHPLVRP) the chain is Cytoplasmic. Residues 91–111 (ALLASLFGYSLGGLSITIDVG) form a helical membrane-spanning segment. Residues 112 to 133 (RYWNLPYFYIPGHFNVNSVLFE) are Periplasmic-facing. The chain crosses the membrane as a helical span at residues 134–154 (TAVCMTIYIGVMALEFAPALF). Residues 155-168 (ERLGWKVSLQRLNK) are Cytoplasmic-facing. Residues 169 to 189 (VMFFIIALGALLPTMHQSSMG) form a helical membrane-spanning segment. The Periplasmic portion of the chain corresponds to 190–207 (SLMISAGYKVHPLWQSYE). Residues 208 to 228 (MLPLFSLLTAFIMGFSIVIFE) traverse the membrane as a helical segment. Residues 229–249 (GSLVQAGLRGNGPDEKSLFVK) are Cytoplasmic-facing. A helical membrane pass occupies residues 250 to 270 (LTNTISVLLAIFIVLRFGELI). Topologically, residues 271-281 (YRDKLSLAFAG) are periplasmic. Residues 282 to 302 (DFYSVMFWIEVLLMLFPLVVL) form a helical membrane-spanning segment. The Cytoplasmic portion of the chain corresponds to 303–333 (RVAKLRNDSRMLFLSALSALLGCATWRLTYS). The helical transmembrane segment at 334–354 (LVAFNPGGGYAYFPTWEELLI) threads the bilayer. Position 355 (S355) is a topological domain, periplasmic. A helical transmembrane segment spans residues 356–376 (IGFVAIEICAYIVLIRLLPIL). Residues 377–392 (PPLKQNDHNRHEASKA) lie on the Cytoplasmic side of the membrane.

It belongs to the NrfD family.

Its subcellular location is the cell inner membrane. Its function is as follows. Probable b-type cytochrome. This Escherichia coli (strain K12) protein is Probable Ni/Fe-hydrogenase 2 b-type cytochrome subunit (hybB).